The chain runs to 428 residues: S-adenosylmethionine synthase (428 aa).

Residue H14 participates in ATP binding. Position 16 (D16) interacts with Mg(2+). Residue E42 coordinates K(+). Positions 55 and 98 each coordinate L-methionine. The tract at residues Q98–R108 is flexible loop. Residues D165 to K167, K251 to F252, D260, R266 to K267, A283, and K287 contribute to the ATP site. D260 lines the L-methionine pocket. Residue K291 coordinates L-methionine.

It belongs to the AdoMet synthase family. Homotetramer; dimer of dimers. Requires Mg(2+) as cofactor. The cofactor is K(+).

Its subcellular location is the cytoplasm. It carries out the reaction L-methionine + ATP + H2O = S-adenosyl-L-methionine + phosphate + diphosphate. Its pathway is amino-acid biosynthesis; S-adenosyl-L-methionine biosynthesis; S-adenosyl-L-methionine from L-methionine: step 1/1. Catalyzes the formation of S-adenosylmethionine (AdoMet) from methionine and ATP. The overall synthetic reaction is composed of two sequential steps, AdoMet formation and the subsequent tripolyphosphate hydrolysis which occurs prior to release of AdoMet from the enzyme. The polypeptide is S-adenosylmethionine synthase (Parabacteroides distasonis (strain ATCC 8503 / DSM 20701 / CIP 104284 / JCM 5825 / NCTC 11152)).